The sequence spans 406 residues: Methyltransferase cfoD (406 aa).

S-adenosyl-L-methionine contacts are provided by aspartate 270 and arginine 312. Catalysis depends on histidine 315, which acts as the Proton acceptor.

It belongs to the class I-like SAM-binding methyltransferase superfamily. Cation-independent O-methyltransferase family.

The protein operates within secondary metabolite biosynthesis; flavonoid biosynthesis. Its function is as follows. Methyltransferase; part of the gene cluster that mediates the biosynthesis of chlorflavonin, a fungal flavonoid with acetolactate synthase inhibitory activity. Within the pathway, cfoD is responsible for the methylation at position C3-OH of flavonoid. The pathway begins with the PKS-NRPS hybrid synthetase cfoA that uses benzoic acid or p-hydroxybenzoic acid as a starter unit with four rounds of chain elongation using malonyl-CoA to form the chalcone skeleton. Then, a new type of chalcone isomerase, cfoK, catalyzes the conversion of the chalcone into a flavanone by a histidine-mediated oxa-Michael addition mechanism. The desaturation of flavanone to flavone is catalyzed by a new type of flavone synthase, the flavin mononucleotide (FMN)-dependent oxidoreductase cfoJ. Monooxygenases cfoF, cfoG, and P450 cfoH are responsible for the hydroxylation of the flavonoid skeleton at sites C3, C8, and C2', respectively. Like cfoF, the dehydratase cfoI also plays a role in the hydroxylation of position C3. Methyltransferases cfoB, cfoC, and cfoD then catalyze the methylation of C7-OH, C8-OH, and C3-OH, respectively. Finally, the monooxygenase cfoE is responsible for the chlorination of flavonoid at position C3'. In Aspergillus candidus, this protein is Methyltransferase cfoD.